The primary structure comprises 622 residues: 1-deoxy-D-xylulose-5-phosphate synthase (622 aa).

Thiamine diphosphate is bound by residues histidine 80 and 121 to 123; that span reads GHS. Aspartate 152 contributes to the Mg(2+) binding site. Thiamine diphosphate is bound by residues 153-154, asparagine 181, tyrosine 288, and glutamate 370; that span reads GA. Asparagine 181 lines the Mg(2+) pocket.

Belongs to the transketolase family. DXPS subfamily. In terms of assembly, homodimer. Mg(2+) serves as cofactor. Requires thiamine diphosphate as cofactor.

It catalyses the reaction D-glyceraldehyde 3-phosphate + pyruvate + H(+) = 1-deoxy-D-xylulose 5-phosphate + CO2. It participates in metabolic intermediate biosynthesis; 1-deoxy-D-xylulose 5-phosphate biosynthesis; 1-deoxy-D-xylulose 5-phosphate from D-glyceraldehyde 3-phosphate and pyruvate: step 1/1. Functionally, catalyzes the acyloin condensation reaction between C atoms 2 and 3 of pyruvate and glyceraldehyde 3-phosphate to yield 1-deoxy-D-xylulose-5-phosphate (DXP). The polypeptide is 1-deoxy-D-xylulose-5-phosphate synthase (Shewanella denitrificans (strain OS217 / ATCC BAA-1090 / DSM 15013)).